Reading from the N-terminus, the 1264-residue chain is MASACGAPGPGGAGPGGALGSPAPAWYHRDLSRAAAEELLARAGRDGSFLVRDSESVAGAFALCVLYQKHVHTYRILPDGEDFLAVQTSQGVPVRRFQTLGELIGLYAQPNQGLVCALLLPVEREREPDPPDDRDVSDGEDEKPPLPPRSGSTSISAPVGPGSPPAAPETPTTPAAESAPNGLSTVSHEYLKGSYGLDLEAVRGGASNLPHLTRTLATSCRRLHSEVDKVLAGLEILSKVFDQQSSPMVTRLLQQQNPAQTGEQELESLVLKLSVLKDFLSGIQKKALKVLQDMSSTAPPAPPQPAIRKAKTVPVQAFEVKLDVTLGDLTKIGKSQKFTLSVDVEGGRLVLLRRQRDSQEDWTTFTHDRIRQLIKSQRVQNKLGVVFEKEKDRTQRKDFIFVSARKREAFCQLLQLMKNKHSKQDEPDMISVFIGSWNMGSVPPPKNVTSWFTSKGLGKTLDEVTVTIPHDIYVFGTQENSVGDREWLDLLRGGLKELTDLDYRPIAMQSLWNIKVAVLVKPEHENRISHVSTSSVKTGIANTLGNKGAVGVSFMFNGTSFGFVNCHLTSGNEKTARRNQNYLDILRLLSLGDRQLSAFDISLRFTHLFWFGDLNYRLDMDIQEILNYISRKEFEPLLRVDQLNLEREKHKVFLRFSEEEISFPPTYRYERGSRDTYAWHKQKPTGVRTNVPSWCDRILWKSYPETHIICNSYGCTDDIVTSDHSPVFGTFEVGVTSQFISKKGLSKTSDQAYIEFESIEAIVKTASRTKFFIEFYSTCLEEYKKSFENDAQSSDNINFLKVQWSSRQLPTLKPILADIEYLQDQHLLLTVKSMDGYESYGECVVALKSMIGSTAQQFLTFLSHRGEETGNIRGSMKVRVPTERLGTRERLYEWISIDKDEAGAKSKAPSVSRGSQDPRSGNRKPAPAEASCPLSKLFEEPEKPPPTGRPPAPPRAASREEPLTPRLKAEGAPEPEGVAAPPPKNSFNNPAYYVLEGVPHQLLPPEPPSPARAPVPPATKNKVAITVPAPQLGRHRPPRVGEGSSSDEESGGTLPPPDFPPPPLPDSAIFLPPSLDPLPGPVVRGRSGGEARGPPPPKAHPRPPLPPGPSPTSTFLGEVASGDDRSCSVLQMAKTLSEVDYAPAGPGRSVLLPGPLELQPPRGLPSDYGRPLSFPPPRIRESIQEDLAEEAPCPQGGRAGGLGEAGMGAWLRAIGLERYEEGLVHNGWDDLEFLSDITEEDLEEAGVQDPAHKRLLLDTLQLSK.

Residues 26–122 (WYHRDLSRAA…GLVCALLLPV (97 aa)) form the SH2 domain. Positions 124 to 137 (REREPDPPDDRDVS) are enriched in basic and acidic residues. Positions 124–182 (REREPDPPDDRDVSDGEDEKPPLPPRSGSTSISAPVGPGSPPAAPETPTTPAAESAPNG) are disordered. Ser137 is subject to Phosphoserine. Over residues 169-180 (ETPTTPAAESAP) the composition is skewed to low complexity. Thr170 is modified (phosphothreonine). Ser246 and Ser358 each carry phosphoserine. Position 892 is a phosphotyrosine (Tyr892). A Phosphoserine modification is found at Ser896. Residues 903–1123 (GAKSKAPSVS…TFLGEVASGD (221 aa)) form a disordered region. The segment covering 944–954 (PPPTGRPPAPP) has biased composition (pro residues). Positions 950-955 (PPAPPR) match the SH3-binding motif. Positions 957–971 (ASREEPLTPRLKAEG) are enriched in basic and acidic residues. Thr964 bears the Phosphothreonine mark. The NPXY motif signature appears at 989–992 (NPAY). A Phosphotyrosine modification is found at Tyr992. Composition is skewed to pro residues over residues 1002–1017 (LLPPEPPSPARAPVPP), 1054–1065 (LPPPDFPPPPLP), and 1093–1110 (GPPPPKAHPRPPLPPGPS). The residue at position 1137 (Ser1137) is a Phosphoserine. Residues 1140–1178 (DYAPAGPGRSVLLPGPLELQPPRGLPSDYGRPLSFPPPR) form a disordered region. Residues Tyr1141 and Tyr1168 each carry the phosphotyrosine modification. The 55-residue stretch at 1210–1264 (WLRAIGLERYEEGLVHNGWDDLEFLSDITEEDLEEAGVQDPAHKRLLLDTLQLSK) folds into the SAM domain. Residue Ser1263 is modified to Phosphoserine.

It belongs to the inositol 1,4,5-trisphosphate 5-phosphatase family. As to quaternary structure, interacts with tyrosine phosphorylated form of SHC1. Interacts with EGFR. Upon stimulation by the EGF signaling pathway, it forms a complex with SHC1 and EGFR. Interacts with cytoskeletal protein SORBS3/vinexin, promoting its localization to the periphery of cells. Forms a complex with filamin (FLNA or FLNB), actin, GPIb (GP1BA or GP1BB) that regulates cortical and submembraneous actin. Interacts with c-Met/MET, when c-Met/MET is phosphorylated on 'Tyr-1356'. Interacts with p130Cas/BCAR1. Interacts with CENTD3/ARAP3 via its SAM domain. Interacts with c-Cbl/CBL and CAP/SORBS1. Interacts with activated EPHA2 receptor. Interacts with receptor FCGR2A. Interacts with receptor FCGR2B. Interacts with tyrosine kinase ABL1. Interacts with tyrosine kinase TEC. Interacts with CSF1R. Interacts (via N-terminus) with SH3YL1 (via SH3 domain). Interacts with FCRL6 (tyrosine phosphorylated form). Interacts (via SH2 domain) with tyrosine phosphorylated KLRC1 (via ITIM). Interacts with NEDD9/HEF1. In terms of processing, tyrosine phosphorylated by the members of the SRC family after exposure to a diverse array of extracellular stimuli such as insulin, growth factors such as EGF or PDGF, chemokines, integrin ligands and hypertonic and oxidative stress. May be phosphorylated upon IgG receptor FCGR2B-binding. Phosphorylated at Tyr-992 following cell attachment and spreading. Phosphorylated at Tyr-1168 following EGF signaling pathway stimulation. Phosphorylated at Thr-964 in response to PDGF.

The protein localises to the cytoplasm. The protein resides in the cytosol. It localises to the membrane. Its subcellular location is the cell projection. It is found in the filopodium. The protein localises to the lamellipodium. The protein resides in the basal cell membrane. It localises to the nucleus. Its subcellular location is the nucleus speckle. It is found in the cytoskeleton. The protein localises to the spindle pole. It carries out the reaction a 1,2-diacyl-sn-glycero-3-phospho-(1D-myo-inositol-3,4,5-trisphosphate) + H2O = a 1,2-diacyl-sn-glycero-3-phospho-(1D-myo-inositol-3,4-bisphosphate) + phosphate. The catalysed reaction is 1,2-dioctanoyl-sn-glycero-3-phospho-(1D-myo-inositol-3,4,5-trisphosphate) + H2O = 1,2-dioctanoyl-sn-glycero-3-phospho-(1D-myo-inositol-3,4-bisphosphate) + phosphate. The enzyme catalyses 1,2-dihexadecanoyl-sn-glycero-3-phospho-(1D-myo-inositol-3,4,5-trisphosphate) + H2O = 1,2-dihexadecanoyl-sn-glycero-3-phospho-(1D-myo-inositol-3,4-bisphosphate) + phosphate. Its activity is regulated as follows. Activated upon translocation to the sites of synthesis of PtdIns(3,4,5)P3 in the membrane. Enzymatic activity is enhanced in the presence of phosphatidylserine. Phosphatidylinositol (PtdIns) phosphatase that specifically hydrolyzes the 5-phosphate of phosphatidylinositol-3,4,5-trisphosphate (PtdIns(3,4,5)P3) to produce PtdIns(3,4)P2, thereby negatively regulating the PI3K (phosphoinositide 3-kinase) pathways. Required for correct mitotic spindle orientation and therefore progression of mitosis. Plays a central role in regulation of PI3K-dependent insulin signaling, although the precise molecular mechanisms and signaling pathways remain unclear. While overexpression reduces both insulin-stimulated MAP kinase and Akt activation, its absence does not affect insulin signaling or GLUT4 trafficking. Confers resistance to dietary obesity. May act by regulating AKT2, but not AKT1, phosphorylation at the plasma membrane. Part of a signaling pathway that regulates actin cytoskeleton remodeling. Required for the maintenance and dynamic remodeling of actin structures as well as in endocytosis, having a major impact on ligand-induced EGFR internalization and degradation. Participates in regulation of cortical and submembraneous actin by hydrolyzing PtdIns(3,4,5)P3 thereby regulating membrane ruffling. Regulates cell adhesion and cell spreading. Required for HGF-mediated lamellipodium formation, cell scattering and spreading. Acts as a negative regulator of EPHA2 receptor endocytosis by inhibiting via PI3K-dependent Rac1 activation. Acts as a regulator of neuritogenesis by regulating PtdIns(3,4,5)P3 level and is required to form an initial protrusive pattern, and later, maintain proper neurite outgrowth. Acts as a negative regulator of the FC-gamma-RIIA receptor (FCGR2A). Mediates signaling from the FC-gamma-RIIB receptor (FCGR2B), playing a central role in terminating signal transduction from activating immune/hematopoietic cell receptor systems. Involved in EGF signaling pathway. Upon stimulation by EGF, it is recruited by EGFR and dephosphorylates PtdIns(3,4,5)P3. Plays a negative role in regulating the PI3K-PKB pathway, possibly by inhibiting PKB activity. Down-regulates Fc-gamma-R-mediated phagocytosis in macrophages independently of INPP5D/SHIP1. In macrophages, down-regulates NF-kappa-B-dependent gene transcription by regulating macrophage colony-stimulating factor (M-CSF)-induced signaling. Plays a role in the localization of AURKA and NEDD9/HEF1 to the basolateral membrane at interphase in polarized cysts, thereby mediates cell cycle homeostasis, cell polarization and cilia assembly. Additionally promotion of cilia growth is also facilitated by hydrolysis of (PtdIns(3,4,5)P3) to PtdIns(3,4)P2. Promotes formation of apical membrane-initiation sites during the initial stages of lumen formation via Rho family-induced actin filament organization and CTNNB1 localization to cell-cell contacts. May also hydrolyze PtdIns(1,3,4,5)P4, and could thus affect the levels of the higher inositol polyphosphates like InsP6. Involved in endochondral ossification. The sequence is that of Phosphatidylinositol 3,4,5-trisphosphate 5-phosphatase 2 from Canis lupus familiaris (Dog).